The following is a 741-amino-acid chain: Zinc transporter ZIP6 (741 aa).

An N-terminal signal peptide occupies residues 1-20 (MATNLSVIMILTFALWVTNP). Topologically, residues 21 to 311 (LHELQSTAAF…PKTYSLQIAW (291 aa)) are extracellular. N-linked (GlcNAc...) asparagine glycosylation is present at Asn68. The span at 95-111 (HDHERHSDHERHSDHER) shows a compositional bias: basic and acidic residues. Disordered regions lie at residues 95–172 (HDHE…EVTS) and 189–213 (ETPKPGRRTKDINPSTPPSITEKSR). The segment covering 135–147 (DNSGKNPNTSQGK) has biased composition (polar residues). N-linked (GlcNAc...) asparagine glycosylation occurs at Asn142. Residues 150 to 162 (RPAEHVNGRRNGK) show a composition bias toward basic and acidic residues. Low complexity predominate over residues 163-172 (ESASSSEVTS). Positions 200-209 (INPSTPPSIT) are enriched in polar residues. 3 N-linked (GlcNAc...) asparagine glycosylation sites follow: Asn226, Asn251, and Asn268. A helical transmembrane segment spans residues 312 to 332 (LGGFIAISIISFLSLLGVILV). Residues 333-341 (PLMNRVFFK) are Cytoplasmic-facing. A helical membrane pass occupies residues 342–362 (FLLSFLVALAVGTLSGDALLH). The Extracellular segment spans residues 363-409 (LLPHSHASHHHSHSHEEPAMEMKRGPLFSHLSAQNLEESSYFDSTWK). Residues 410 to 430 (GLTALGGLYFMFLVEHVLTLI) form a helical membrane-spanning segment. The Cytoplasmic segment spans residues 431–643 (KQFKDKKKKN…LKAGMTVKQA (213 aa)). The segment at 434 to 494 (KDKKKKNQKK…QEPSPFDSQQ (61 aa)) is disordered. Positions 450–475 (VESKKQLSKYESQLSTNEEKVDTGER) form a coiled coil. Residues Ser457 and Ser464 each carry the phosphoserine modification. Positions 466–477 (NEEKVDTGERPE) are enriched in basic and acidic residues. Positions 481-494 (QADSQEPSPFDSQQ) are enriched in polar residues. A helical membrane pass occupies residues 644 to 664 (VLYNALSAMLAYLGMATGIFI). Residues 665 to 672 (GHYAENVS) are Extracellular-facing. A glycan (N-linked (GlcNAc...) asparagine) is linked at Asn670. A helical membrane pass occupies residues 673–693 (MWIFALTAGLFMYVALVDMVP). The Cytoplasmic portion of the chain corresponds to 694–710 (EMLHNDASDHGCSRWGY). A helical membrane pass occupies residues 711–731 (FFLQNAGILLGFGIMLLISIF). Residues 732–741 (EHKIVFRINF) lie on the Extracellular side of the membrane.

This sequence belongs to the ZIP transporter (TC 2.A.5) family. In terms of assembly, interacts with SLC39A10; which triggers cells to undergo EMT and mitosis. Found in a complex with SLC39A6, SLC39A10 and with the 'Ser-727' phosphorylated form of STAT3 throughout mitosis. Found in a complex with SLC39A6, SLC39A10 and with NCAM1; this complex controls NCAM1 phosphorylation and integration into focal adhesion complexes during epithelial-to-mesenchymal transition (EMT). Found in a complex with SLC39A6, SLC39A10 and with GSK3B that controls NCAM1 phosphorylation. In terms of processing, cleaved on the N-terminus before locating to the plasma membrane. N-glycosylated. Post-translationally, phosphorylated by ZAP70 in response to TCR stimulation leading to its activation. Expressed in the endothelial cells of the brain capillaries.

The protein resides in the cell membrane. The protein localises to the cell projection. It localises to the lamellipodium membrane. Its subcellular location is the membrane raft. It is found in the apical cell membrane. It carries out the reaction Zn(2+)(in) = Zn(2+)(out). Zinc-influx transporter which plays a role in zinc homeostasis and in the induction of epithelial-to-mesenchymal transition (EMT). When associated with SLC39A10, the heterodimer formed by SLC39A10 and SLC39A6 mediates cellular zinc uptake to trigger cells to undergo epithelial- to-mesenchymal transition (EMT). The SLC39A10-SLC39A6 heterodimer also controls NCAM1 phosphorylation and its integration into focal adhesion complexes during EMT. Zinc influx inactivates GSK3B, enabling unphosphorylated SNAI1 in the nucleus to down-regulate adherence genes such as CDH1, causing loss of cell adherence. In addition, the SLC39A10-SLC39A6 heterodimer plays an essentiel role in initiating mitosis by importing zinc into cells to initiate a pathway resulting in the onset of mitosis. Participates in the T-cell receptor signaling regulation by mediating cellular zinc uptake into activated lymphocytes. Regulates the zinc influx necessary for proper meiotic progression to metaphase II (MII) that allows the oocyte-to-egg transition. This Rattus norvegicus (Rat) protein is Zinc transporter ZIP6.